Here is a 210-residue protein sequence, read N- to C-terminus: Protein GET1 (210 aa).

Residues 1-4 (MPSL) are Lumenal-facing. Residues 5–24 (LIIVLIIHVVTYLINTIGAN) traverse the membrane as a helical segment. Residues 25–110 (TIDSLLWLLY…SFDLAVKSIR (86 aa)) are Cytoplasmic-facing. A coiled-coil region spans residues 39–95 (NQTSQTANEQRRLKREVMQLKREMNATSSQDEFAKWAKLRRRHDKTMEEYEAKNKAL). Residues 111–131 (FFSTTGLKLFLQFWCSKTPIF) form a helical membrane-spanning segment. Residues 132–155 (ELPRGWIPWQVEWVLSFPRAPLGT) are Lumenal-facing. Residues 156-172 (VSIQIWGGVCATVVSLA) traverse the membrane as a helical segment. At 173-210 (GDAIGVVNVYLTSKAPKQKEPATSGENSARPMAIKKEL) the chain is on the cytoplasmic side. The disordered stretch occupies residues 189–210 (KQKEPATSGENSARPMAIKKEL).

This sequence belongs to the WRB/GET1 family. In terms of assembly, interacts with GET3.

It localises to the endoplasmic reticulum membrane. Its function is as follows. Required for the post-translational delivery of tail-anchored (TA) proteins to the endoplasmic reticulum. Acts as a membrane receptor for soluble GET3, which recognizes and selectively binds the transmembrane domain of TA proteins in the cytosol. The polypeptide is Protein GET1 (Coccidioides immitis (strain RS) (Valley fever fungus)).